A 435-amino-acid chain; its full sequence is MTAPELRAPAGHPQEPPARSSPAQALSSYHHFPTSDQERWYQETGSLCSRFLEAGQYGLHQQYQFMFFFMHHLIPALGPYPQKWRSTISRSGLPIEFSLNFQKGSHRLLRIGFEPVNFLSGSSQDPFNRIPIADLLAQLARLQLRGFDTQCFQQLLTRFQLSLDEVRQLPPDDQPLKSQGAFGFDFNPDGAILVKGYVFPYLKAKAAGVPVATLIAESVRAIDADRNQFMHAFSLINDYMQESTGYNEYTFLSCDLVEMSRQRVKIYGAHTEVTWAKIAEMWTLGGRLIEEPEIMEGLARLKQIWSLLQIGEGSRAFKGGFDYGKASATDQIPSPIIWNYEISPGSSFPVPKFYLPVHGENDLRVARSLAQFWDSLGWSEHACAYPDMLQQLYPDLDVSRTSRLQSWISYSYTAKKGVYMSVYFHSQSTYLWEED.

The interval 1–28 is disordered; that stretch reads MTAPELRAPAGHPQEPPARSSPAQALSS. A brevianamide F-binding site is contributed by Glu96. Positions 110, 195, 197, 265, 267, 354, 419, and 423 each coordinate dimethylallyl diphosphate.

It belongs to the tryptophan dimethylallyltransferase family. In terms of assembly, monomer.

The catalysed reaction is brevianamide F + dimethylallyl diphosphate = deoxybrevianamide E + diphosphate. Its pathway is alkaloid biosynthesis. Its function is as follows. Deoxybrevianamide E synthase; part of the gene cluster that mediates the biosynthesis of notoamide, a fungal indole alkaloid that belongs to a family of natural products containing a characteristic bicyclo[2.2.2]diazaoctane core. The first step of notoamide biosynthesis involves coupling of L-proline and L-tryptophan by the bimodular NRPS notE', to produce cyclo-L-tryptophan-L-proline called brevianamide F. The reverse prenyltransferase notF' then acts as a deoxybrevianamide E synthase and converts brevianamide F to deoxybrevianamide E via reverse prenylation at C-2 of the indole ring leading to the bicyclo[2.2.2]diazaoctane core. Deoxybrevianamide E is further hydroxylated at C-6 of the indole ring, likely catalyzed by the cytochrome P450 monooxygenase notG', to yield 6-hydroxy-deoxybrevianamide E. 6-hydroxy-deoxybrevianamide E is a specific substrate of the prenyltransferase notC' for normal prenylation at C-7 to produce 6-hydroxy-7-prenyl-deoxybrevianamide, also called notoamide S. As the proposed pivotal branching point in notoamide biosynthesis, notoamide S can be diverted to notoamide E through an oxidative pyran ring closure putatively catalyzed by either notH' cytochrome P450 monooxygenase or the notD' FAD-linked oxidoreductase. This step would be followed by an indole 2,3-epoxidation-initiated pinacol-like rearrangement catalyzed by the notB' FAD-dependent monooxygenase leading to the formation of notoamide C and notoamide D. On the other hand notoamide S is converted to notoamide T by notH' (or notD'), a bifunctional oxidase that also functions as the intramolecular Diels-Alderase responsible for generation of (-)-notoamide T. To generate antipodal (+)-notoaminide T, notH (or notD) in Aspergillus strain MF297-2 is expected to catalyze a Diels-Alder reaction leading to the opposite stereochemistry. The remaining oxidoreductase notD' (or notH') likely catalyzes the oxidative pyran ring formation to yield (-)-stephacidin A. The FAD-dependent monooxygenase notI' is highly similar to notB' and is predicted to catalyze a similar conversion from (-)-stephacidin A to (+)-notoamide B via the 2,3-epoxidation of (-)-stephacidin A followed by a pinacol-type rearrangement. Finally, it remains unclear which enzyme could be responsible for the final hydroxylation steps leading to notoamide A and sclerotiamide. This Aspergillus versicolor protein is Deoxybrevianamide E synthase.